The chain runs to 367 residues: UDP-N-acetylenolpyruvoylglucosamine reductase 2 (367 aa).

The FAD-binding PCMH-type domain occupies 31–198 (IGGKPRSAVR…LAIELQLLTD (168 aa)). The active site involves Arg176. Residue Ser256 is the Proton donor of the active site. The active site involves Glu357.

This sequence belongs to the MurB family. FAD is required as a cofactor.

It is found in the cytoplasm. The catalysed reaction is UDP-N-acetyl-alpha-D-muramate + NADP(+) = UDP-N-acetyl-3-O-(1-carboxyvinyl)-alpha-D-glucosamine + NADPH + H(+). It functions in the pathway cell wall biogenesis; peptidoglycan biosynthesis. Cell wall formation. This is UDP-N-acetylenolpyruvoylglucosamine reductase 2 (murB2) from Corynebacterium glutamicum (strain ATCC 13032 / DSM 20300 / JCM 1318 / BCRC 11384 / CCUG 27702 / LMG 3730 / NBRC 12168 / NCIMB 10025 / NRRL B-2784 / 534).